The primary structure comprises 2059 residues: Desmoplakin-A (2059 aa).

Residues 1–11 are compositionally biased toward polar residues; that stretch reads MSLSGSQTRLH. Positions 1 to 25 are disordered; it reads MSLSGSQTRLHQISRRSSSRPDLTA. 2 coiled-coil regions span residues 320–354 and 397–453; these read IPQK…LLKN and FKEA…VQTL. The disordered stretch occupies residues 665–690; that stretch reads EVSSGKTATGVSSGKTATGVSSGKTS. Residues 671–690 are compositionally biased toward low complexity; that stretch reads TATGVSSGKTATGVSSGKTS. Coiled-coil stretches lie at residues 1062–1229 and 1261–1383; these read MEEL…AELE and LQQD…LQQR. Plectin repeat units lie at residues 1450–1488, 1489–1526, 1564–1602, 1666–1694, 1847–1885, and 1923–1961; these read YLGG…TLEL, LEAQ…KDKL, LLEA…NEIL, IVDP…FLEL, LLEA…SVKL, and FLEF…AQKL. Positions 2008 to 2059 are disordered; the sequence is KGISSPYNVSSGPSSRSGSRAGSRTGSRSGSRRGSVDYSSSSVSYTFFSSAS. The segment covering 2011–2059 has biased composition (low complexity); sequence SSPYNVSSGPSSRSGSRAGSRTGSRSGSRRGSVDYSSSSVSYTFFSSAS.

The protein belongs to the plakin or cytolinker family.

The protein resides in the cell junction. The protein localises to the desmosome. It is found in the cell membrane. Its function is as follows. Involved in the organization of desmosome cell-cell junctions. Of particular importance in cell adhesion in the skin and during cardiac development. May also play a role in the regulation of Wnt, TGF-beta and Hippo signaling pathways. In Danio rerio (Zebrafish), this protein is Desmoplakin-A.